The following is a 297-amino-acid chain: N-acetylmannosamine kinase (297 aa).

Residues 5–12 (ALDIGGTK) and 132–139 (GVGGGIIL) each bind ATP. The Zn(2+) site is built by histidine 156, cysteine 166, cysteine 168, and cysteine 173.

Belongs to the ROK (NagC/XylR) family. NanK subfamily. Homodimer.

It carries out the reaction an N-acyl-D-mannosamine + ATP = an N-acyl-D-mannosamine 6-phosphate + ADP + H(+). The protein operates within amino-sugar metabolism; N-acetylneuraminate degradation; D-fructose 6-phosphate from N-acetylneuraminate: step 2/5. Functionally, catalyzes the phosphorylation of N-acetylmannosamine (ManNAc) to ManNAc-6-P. This is N-acetylmannosamine kinase from Pasteurella multocida (strain Pm70).